The chain runs to 42 residues: Photosystem I reaction center subunit IX (42 aa).

Residues 8–28 (YLSTIPVVGAIWLTFTAGFII) form a helical membrane-spanning segment.

The protein belongs to the PsaJ family.

Its subcellular location is the plastid. The protein resides in the chloroplast thylakoid membrane. In terms of biological role, may help in the organization of the PsaE and PsaF subunits. The chain is Photosystem I reaction center subunit IX from Gracilaria tenuistipitata var. liui (Red alga).